A 64-amino-acid chain; its full sequence is Large ribosomal subunit protein bL33 (64 aa).

This sequence belongs to the bacterial ribosomal protein bL33 family.

The sequence is that of Large ribosomal subunit protein bL33 from Microcystis aeruginosa (strain NIES-843 / IAM M-2473).